Reading from the N-terminus, the 475-residue chain is Ribulose bisphosphate carboxylase large chain (475 aa).

The propeptide occupies Met-1–Ser-2. Pro-3 is modified (N-acetylproline). At Lys-14 the chain carries N6,N6,N6-trimethyllysine. Asn-123 and Thr-173 together coordinate substrate. The Proton acceptor role is filled by Lys-175. Position 177 (Lys-177) interacts with substrate. 3 residues coordinate Mg(2+): Lys-201, Asp-203, and Glu-204. Lys-201 bears the N6-carboxylysine mark. His-294 serves as the catalytic Proton acceptor. Substrate is bound by residues Arg-295, His-327, and Ser-379.

Belongs to the RuBisCO large chain family. Type I subfamily. In terms of assembly, heterohexadecamer of 8 large chains and 8 small chains; disulfide-linked. The disulfide link is formed within the large subunit homodimers. The cofactor is Mg(2+). The disulfide bond which can form in the large chain dimeric partners within the hexadecamer appears to be associated with oxidative stress and protein turnover.

It localises to the plastid. Its subcellular location is the chloroplast. It carries out the reaction 2 (2R)-3-phosphoglycerate + 2 H(+) = D-ribulose 1,5-bisphosphate + CO2 + H2O. It catalyses the reaction D-ribulose 1,5-bisphosphate + O2 = 2-phosphoglycolate + (2R)-3-phosphoglycerate + 2 H(+). RuBisCO catalyzes two reactions: the carboxylation of D-ribulose 1,5-bisphosphate, the primary event in carbon dioxide fixation, as well as the oxidative fragmentation of the pentose substrate in the photorespiration process. Both reactions occur simultaneously and in competition at the same active site. The protein is Ribulose bisphosphate carboxylase large chain of Magnolia acuminata (Cucumber tree).